The following is a 286-amino-acid chain: uncharacterized protein (286 aa).

His-183 (proton donor) is an active-site residue. Cys-277 serves as the catalytic Nucleophile.

It belongs to the DDAH family.

This is an uncharacterized protein from Bacillus subtilis (strain 168).